The sequence spans 360 residues: tRNA-specific 2-thiouridylase MnmA (360 aa).

Residues 9–16 (AMSGGVDS) and Leu35 each bind ATP. The active-site Nucleophile is the Cys104. Cysteines 104 and 197 form a disulfide. ATP is bound at residue Gly128. Positions 147–149 (KDQ) are interaction with tRNA. The active-site Cysteine persulfide intermediate is the Cys197.

Belongs to the MnmA/TRMU family.

Its subcellular location is the cytoplasm. The enzyme catalyses S-sulfanyl-L-cysteinyl-[protein] + uridine(34) in tRNA + AH2 + ATP = 2-thiouridine(34) in tRNA + L-cysteinyl-[protein] + A + AMP + diphosphate + H(+). Its function is as follows. Catalyzes the 2-thiolation of uridine at the wobble position (U34) of tRNA, leading to the formation of s(2)U34. This chain is tRNA-specific 2-thiouridylase MnmA, found in Salinispora tropica (strain ATCC BAA-916 / DSM 44818 / JCM 13857 / NBRC 105044 / CNB-440).